Here is a 99-residue protein sequence, read N- to C-terminus: Gibberellin-regulated protein 3 (99 aa).

Positions 1–26 (MAIFRSTLVLLLILFCLTTFELHVHA) are cleaved as a signal peptide.

The protein belongs to the GASA family. Post-translationally, six disulfide bonds may be present. In terms of tissue distribution, expressed in siliques, dry seeds and vasculature of roots and rosette leaves.

The protein localises to the secreted. In terms of biological role, gibberellin-regulated protein that may function in hormonal controlled steps of development such as seed germination, flowering and seed maturation. The chain is Gibberellin-regulated protein 3 (GASA3) from Arabidopsis thaliana (Mouse-ear cress).